The sequence spans 564 residues: Phenylalanine--tRNA ligase beta subunit (564 aa).

Positions 286–362 (YFQNTLEVSV…IGRGLDSFKP (77 aa)) constitute a B5 domain. Mg(2+)-binding residues include D340, D346, E349, and E350.

This sequence belongs to the phenylalanyl-tRNA synthetase beta subunit family. Type 2 subfamily. In terms of assembly, tetramer of two alpha and two beta subunits. Mg(2+) is required as a cofactor.

The protein resides in the cytoplasm. The enzyme catalyses tRNA(Phe) + L-phenylalanine + ATP = L-phenylalanyl-tRNA(Phe) + AMP + diphosphate + H(+). The sequence is that of Phenylalanine--tRNA ligase beta subunit from Borrelia hermsii (strain HS1 / DAH).